The primary structure comprises 141 residues: Large ribosomal subunit protein uL11 (141 aa).

The protein belongs to the universal ribosomal protein uL11 family. As to quaternary structure, part of the ribosomal stalk of the 50S ribosomal subunit. Interacts with L10 and the large rRNA to form the base of the stalk. L10 forms an elongated spine to which L12 dimers bind in a sequential fashion forming a multimeric L10(L12)X complex. In terms of processing, one or more lysine residues are methylated.

Its function is as follows. Forms part of the ribosomal stalk which helps the ribosome interact with GTP-bound translation factors. The chain is Large ribosomal subunit protein uL11 from Prochlorococcus marinus (strain SARG / CCMP1375 / SS120).